The primary structure comprises 852 residues: MRDFVIVFGSSSAITNPHHHHRRCYATAPESNRKTKSNSSFTKLLPSLPQQHSPSPASVSATHSLSSHFSNVVRWIPDGSLEYYADFASKLAEDGRIEDVALIAETLAAESGANVARFASMVDYDLLSKGISSNLRQGKIESVVYTLKRIEKVGIAPLDLVDDSSVKLMRKQFRAMANSVQVEKAIDLMEILAGLGFKIKELVDPFDVVKSCVEISNPQLAIRYACLLPHTELLLCRIIHGFGKKGDMVSVMTAYEACKQILDTPNMYICRTMIDVCGLCGDYVKSRYIYEDLLKENIKPNIYVINSLMNVNSHDLGYTLKVYKNMQILDVTADMTSYNILLKTCCLAGRVDLAQDIYKEAKRMESSGLLKLDAFTYCTIIKVFADAKMWKWALKVKDDMKSVGVTPNTHTWSSLISACANAGLVEQANHLFEEMLASGCEPNSQCFNILLHACVEACQYDRAFRLFQSWKGSSVNESLYADDIVSKGRTSSPNILKNNGPGSLVNRNSNSPYIQASKRFCFKPTTATYNILLKACGTDYYRGKELMDEMKSLGLSPNQITWSTLIDMCGGSGDVEGAVRILRTMHSAGTRPDVVAYTTAIKICAENKCLKLAFSLFEEMRRYQIKPNWVTYNTLLKARSKYGSLLEVRQCLAIYQDMRNAGYKPNDHFLKELIEEWCEGVIQENGQSQDKISDQEGDNAGRPVSLLIEKVATHMQERTAGNLAIDLQGLTKIEARLVVLAVLRMIKEDYMRGDVVIDDVLIIIGTDEANTVSGKQEITVQEALVKLLRDELSLVVLPAGQRNIIQDAHCVDDADQENTKSFVSISSTRRPAILERLMVTKASLYQWLQRRK.

A chloroplast-targeting transit peptide spans 1-25 (MRDFVIVFGSSSAITNPHHHHRRCY). A disordered region spans residues 17–60 (PHHHHRRCYATAPESNRKTKSNSSFTKLLPSLPQQHSPSPASVS). Residues 44 to 58 (LLPSLPQQHSPSPAS) are compositionally biased toward low complexity. 8 PPR repeats span residues 334–364 (DMTS…AKRM), 373–407 (DAFT…GVTP), 408–442 (NTHT…GCEP), 443–477 (NSQC…SVNE), 525–557 (TTAT…GLSP), 558–592 (NQIT…GTRP), 593–627 (DVVA…QIKP), and 628–665 (NWVT…GYKP).

Belongs to the PPR family. P subfamily.

It localises to the plastid. The protein resides in the chloroplast. In Arabidopsis thaliana (Mouse-ear cress), this protein is Pentatricopeptide repeat-containing protein At5g02830, chloroplastic.